The primary structure comprises 419 residues: Gamma-glutamyl phosphate reductase (419 aa).

Belongs to the gamma-glutamyl phosphate reductase family.

It is found in the cytoplasm. The enzyme catalyses L-glutamate 5-semialdehyde + phosphate + NADP(+) = L-glutamyl 5-phosphate + NADPH + H(+). The protein operates within amino-acid biosynthesis; L-proline biosynthesis; L-glutamate 5-semialdehyde from L-glutamate: step 2/2. Catalyzes the NADPH-dependent reduction of L-glutamate 5-phosphate into L-glutamate 5-semialdehyde and phosphate. The product spontaneously undergoes cyclization to form 1-pyrroline-5-carboxylate. The protein is Gamma-glutamyl phosphate reductase of Bordetella avium (strain 197N).